We begin with the raw amino-acid sequence, 273 residues long: Ribosomal RNA small subunit methyltransferase A (273 aa).

S-adenosyl-L-methionine is bound by residues Asn18, Leu20, Gly45, Glu66, Asp91, and Asn113.

This sequence belongs to the class I-like SAM-binding methyltransferase superfamily. rRNA adenine N(6)-methyltransferase family. RsmA subfamily.

It localises to the cytoplasm. The enzyme catalyses adenosine(1518)/adenosine(1519) in 16S rRNA + 4 S-adenosyl-L-methionine = N(6)-dimethyladenosine(1518)/N(6)-dimethyladenosine(1519) in 16S rRNA + 4 S-adenosyl-L-homocysteine + 4 H(+). Specifically dimethylates two adjacent adenosines (A1518 and A1519) in the loop of a conserved hairpin near the 3'-end of 16S rRNA in the 30S particle. May play a critical role in biogenesis of 30S subunits. This Erwinia tasmaniensis (strain DSM 17950 / CFBP 7177 / CIP 109463 / NCPPB 4357 / Et1/99) protein is Ribosomal RNA small subunit methyltransferase A.